The chain runs to 216 residues: Protein GrpE (216 aa).

2 disordered regions span residues 1–45 (MTEE…LDPT) and 185–216 (RVAVAEPQPGATPAAAKEEKTDDEESGGTEEV). Over residues 205-216 (TDDEESGGTEEV) the composition is skewed to acidic residues.

Belongs to the GrpE family. As to quaternary structure, homodimer.

It localises to the cytoplasm. Its function is as follows. Participates actively in the response to hyperosmotic and heat shock by preventing the aggregation of stress-denatured proteins, in association with DnaK and GrpE. It is the nucleotide exchange factor for DnaK and may function as a thermosensor. Unfolded proteins bind initially to DnaJ; upon interaction with the DnaJ-bound protein, DnaK hydrolyzes its bound ATP, resulting in the formation of a stable complex. GrpE releases ADP from DnaK; ATP binding to DnaK triggers the release of the substrate protein, thus completing the reaction cycle. Several rounds of ATP-dependent interactions between DnaJ, DnaK and GrpE are required for fully efficient folding. In Streptomyces griseus subsp. griseus (strain JCM 4626 / CBS 651.72 / NBRC 13350 / KCC S-0626 / ISP 5235), this protein is Protein GrpE.